We begin with the raw amino-acid sequence, 56 residues long: uncharacterized protein (56 aa).

Residues 6–26 (MLLIMLYMVLVVNDLILYNIL) form a helical membrane-spanning segment.

It is found in the membrane. This is an uncharacterized protein from Dictyostelium discoideum (Social amoeba).